The primary structure comprises 622 residues: Chaperone protein HscA homolog (622 aa).

The protein belongs to the heat shock protein 70 family.

Chaperone involved in the maturation of iron-sulfur cluster-containing proteins. Has a low intrinsic ATPase activity which is markedly stimulated by HscB. The sequence is that of Chaperone protein HscA homolog from Verminephrobacter eiseniae (strain EF01-2).